The primary structure comprises 547 residues: Germacrene A synthase (547 aa).

Mg(2+) contacts are provided by D300, D304, D443, and E451. The short motif at 300 to 304 is the DDXXD motif element; sequence DDTYD.

Belongs to the terpene synthase family. Tpsa subfamily. Mg(2+) serves as cofactor. It depends on Mn(2+) as a cofactor. In terms of tissue distribution, expressed in leaves.

The protein localises to the plastid. It is found in the chloroplast. It carries out the reaction (2E,6E)-farnesyl diphosphate = germacrene A + diphosphate. The catalysed reaction is (2E,6E)-farnesyl diphosphate = (1S,2S,4R)-beta-elemene + diphosphate. Its pathway is secondary metabolite biosynthesis; terpenoid biosynthesis. Sesquiterpene synthase involved in the biosynthesis of volatile compounds widely used in aromatherapy and folk medicine, and present in culinary herbs. Mediates the conversion of (2E,6E)-farnesyl diphosphate (FPP) into germacrene A and beta-elemene. Not able to use (2E)-geranyl diphosphate (GPP) as substrate. The sequence is that of Germacrene A synthase from Lavandula pedunculata subsp. lusitanica (French lavender).